Here is a 282-residue protein sequence, read N- to C-terminus: Prohibitin-1 (282 aa).

An AIM motif is present at residues 106 to 109; the sequence is YQNL.

This sequence belongs to the prohibitin family. As to quaternary structure, the mitochondrial prohibitin complex consists of two subunits (phb1 and phb2). The subunits assemble into a membrane-associated ring-shaped supercomplex of approximately 1 mDa.

The protein localises to the mitochondrion inner membrane. It localises to the cytoplasm. Prohibitin probably acts as a holdase/unfoldase for the stabilization of newly synthesized mitochondrial proteins. Involved in mitophagy; may act as an adapter for atg8 that supports mitophagosome assembly. Negatively regulates the proteolytic processing of atg32 via the i-AAA protease. Acts as a negative regulator of the m-AAA protease. The sequence is that of Prohibitin-1 (phb1) from Schizosaccharomyces pombe (strain 972 / ATCC 24843) (Fission yeast).